Consider the following 64-residue polypeptide: Large ribosomal subunit protein bL28 (64 aa).

The protein belongs to the bacterial ribosomal protein bL28 family.

The sequence is that of Large ribosomal subunit protein bL28 from Elusimicrobium minutum (strain Pei191).